We begin with the raw amino-acid sequence, 219 residues long: Outer membrane virulence protein YopE (219 aa).

The disordered stretch occupies residues 1-37 (MKISSFISTSLPLPTSVSGSSSVGEMSGRSVSQQTSD). Positions 8 to 32 (STSLPLPTSVSGSSSVGEMSGRSVS) are enriched in low complexity. Residues 101 to 219 (SFSDSIKQLA…QQMQKLLSLM (119 aa)) form the Bacterial Rho-GAP domain.

This sequence belongs to the YopE family.

Its subcellular location is the cell outer membrane. Essential virulence determinant; cytotoxic effector, involved in resistance to phagocytosis. This Yersinia pestis protein is Outer membrane virulence protein YopE (yopE).